The following is a 205-amino-acid chain: Probable transcription factor Ken (205 aa).

3 consecutive C2H2-type zinc fingers follow at residues 106-128 (YRCE…LRVH), 134-157 (FACR…CSVH), and 173-196 (YSCC…SGHH).

It localises to the nucleus. In terms of biological role, probable transcription factor, which is required for terminalia development. The polypeptide is Probable transcription factor Ken (ken) (Drosophila yakuba (Fruit fly)).